Consider the following 139-residue polypeptide: MLQPARTKYRKMHKGRMPGSAHRGSDMTYGEYGLMSLQPGWITSRQIEAARIAMTRHVKRGGKIWIRIFPDKPITKKPAETRMGTGKGGVEYYVAVVKPGRILYEMEGMTPEVATGALKLAQAKLPVLTKIVKRADLSL.

The segment at Met-1–Arg-23 is disordered. A compositionally biased stretch (basic residues) spans Thr-7 to Arg-16.

Belongs to the universal ribosomal protein uL16 family. In terms of assembly, part of the 50S ribosomal subunit.

Its function is as follows. Binds 23S rRNA and is also seen to make contacts with the A and possibly P site tRNAs. This is Large ribosomal subunit protein uL16 from Myxococcus xanthus (strain DK1622).